A 424-amino-acid chain; its full sequence is CAAX prenyl protease 1 homolog (424 aa).

Transmembrane regions (helical) follow at residues 3–23 (IPFM…ETYL), 67–87 (EFVT…PWFW), 109–129 (LSFL…FSLY), 155–175 (GTFL…FIVQ), and 185–205 (LWAF…VLIA). A Zn(2+)-binding site is contributed by His-284. Glu-285 is an active-site residue. His-288 provides a ligand contact to Zn(2+). The next 2 helical transmembrane spans lie at 295-315 (TYSF…YTLV) and 332-352 (VLIG…LVSF). Glu-362 lines the Zn(2+) pocket. Catalysis depends on Asp-366, which acts as the Proton donor.

The protein belongs to the peptidase M48A family. The cofactor is Zn(2+). In terms of tissue distribution, expressed in leaves, stems and flowers.

It localises to the endoplasmic reticulum membrane. It catalyses the reaction Hydrolyzes the peptide bond -P2-(S-farnesyl or geranylgeranyl)C-P1'-P2'-P3'-COOH where P1' and P2' are amino acids with aliphatic side chains and P3' is any C-terminal residue.. Proteolytically removes the C-terminal three residues of farnesylated proteins. The substrate specificity is only partially overlapping with that of FACE2. This is CAAX prenyl protease 1 homolog (FACE1) from Arabidopsis thaliana (Mouse-ear cress).